The chain runs to 391 residues: Tyrosine recombinase XerC-like (391 aa).

The 85-residue stretch at 64-148 folds into the Core-binding (CB) domain; the sequence is VTLGDLMHTW…FLKTFFNYAV (85 aa). The Tyr recombinase domain maps to 175-384; the sequence is TEIETFSDEE…IPKQKTNAVE (210 aa). Residues Arg-210, Lys-244, His-335, Arg-338, and His-361 contribute to the active site. Tyr-371 acts as the O-(3'-phospho-DNA)-tyrosine intermediate in catalysis.

The protein belongs to the 'phage' integrase family.

Its subcellular location is the cytoplasm. In terms of biological role, site-specific tyrosine recombinase, which acts by catalyzing the cutting and rejoining of the recombining DNA molecules. The protein is Tyrosine recombinase XerC-like of Caldanaerobacter subterraneus subsp. tengcongensis (strain DSM 15242 / JCM 11007 / NBRC 100824 / MB4) (Thermoanaerobacter tengcongensis).